A 229-amino-acid polypeptide reads, in one-letter code: 2-C-methyl-D-erythritol 4-phosphate cytidylyltransferase (229 aa).

Belongs to the IspD/TarI cytidylyltransferase family. IspD subfamily.

The catalysed reaction is 2-C-methyl-D-erythritol 4-phosphate + CTP + H(+) = 4-CDP-2-C-methyl-D-erythritol + diphosphate. It participates in isoprenoid biosynthesis; isopentenyl diphosphate biosynthesis via DXP pathway; isopentenyl diphosphate from 1-deoxy-D-xylulose 5-phosphate: step 2/6. Functionally, catalyzes the formation of 4-diphosphocytidyl-2-C-methyl-D-erythritol from CTP and 2-C-methyl-D-erythritol 4-phosphate (MEP). This chain is 2-C-methyl-D-erythritol 4-phosphate cytidylyltransferase, found in Neisseria meningitidis serogroup C (strain 053442).